The chain runs to 519 residues: Keratin, type II cytoskeletal 1b (519 aa).

Residues 1 to 166 (MSRQFSSQSA…DPEIQKIKTQ (166 aa)) are head. Omega-N-methylarginine occurs at positions 81 and 95. The interval 167–202 (EREQIKTLNNKFASFIDKVRFLEQQNQVLQTKWELL) is coil 1A. Residues 167 to 480 (EREQIKTLNN…ELLEGEESRM (314 aa)) enclose the IF rod domain. The interval 203-221 (QQVNTSTRTSSLEPIFEEF) is linker 1. Positions 222–313 (INQLQRQVDV…YLFDTELSQI (92 aa)) are coil 1B. The segment at 314-337 (QTHVSDTNVILSMDNNRSLDLDSI) is linker 12. A coil 2 region spans residues 338–476 (INAVRTQYEL…ATYRELLEGE (139 aa)). The segment at 477 to 519 (ESRMSGALQSQVSIWALPSNEGNDLGERLHDPQSQVPVPKLGC) is tail. A disordered region spans residues 499–519 (NDLGERLHDPQSQVPVPKLGC).

Belongs to the intermediate filament family. Post-translationally, undergoes deimination of some arginine residues (citrullination).

The sequence is that of Keratin, type II cytoskeletal 1b (Krt77) from Rattus norvegicus (Rat).